A 39-amino-acid polypeptide reads, in one-letter code: Bomanin Short 3 (39 aa).

The signal sequence occupies residues 1–18 (MKFLSLAFVLGLLALANA). A propeptide spanning residues 19–23 (TPLNP) is cleaved from the precursor. An intrachain disulfide couples Cys-32 to Cys-35.

This sequence belongs to the bomanin family. Hemolymph (at protein level).

The protein localises to the secreted. In terms of biological role, secreted immune-induced peptide induced by Toll signaling. Has a role in resistance bacterial and fungal infections. The strength of antimicrobial activity appears to correlate with the overall level of expression. Has no activity against the fungus C.glabrata in vitro. This chain is Bomanin Short 3, found in Drosophila melanogaster (Fruit fly).